Consider the following 292-residue polypeptide: ATP synthase gamma chain (292 aa).

This sequence belongs to the ATPase gamma chain family. F-type ATPases have 2 components, CF(1) - the catalytic core - and CF(0) - the membrane proton channel. CF(1) has five subunits: alpha(3), beta(3), gamma(1), delta(1), epsilon(1). CF(0) has three main subunits: a, b and c.

It localises to the cell inner membrane. Functionally, produces ATP from ADP in the presence of a proton gradient across the membrane. The gamma chain is believed to be important in regulating ATPase activity and the flow of protons through the CF(0) complex. The polypeptide is ATP synthase gamma chain (Brucella anthropi (strain ATCC 49188 / DSM 6882 / CCUG 24695 / JCM 21032 / LMG 3331 / NBRC 15819 / NCTC 12168 / Alc 37) (Ochrobactrum anthropi)).